The primary structure comprises 515 residues: Maturase K (515 aa).

The protein belongs to the intron maturase 2 family. MatK subfamily.

The protein localises to the plastid. The protein resides in the chloroplast. Usually encoded in the trnK tRNA gene intron. Probably assists in splicing its own and other chloroplast group II introns. The protein is Maturase K of Pinus densiflora (Japanese red pine).